The following is a 64-amino-acid chain: Large ribosomal subunit protein bL35 (64 aa).

A compositionally biased stretch (basic residues) spans 1 to 14 (MKNKTHKGTAKRVK). The tract at residues 1–29 (MKNKTHKGTAKRVKVTGSGKLVREQANRR) is disordered.

The protein belongs to the bacterial ribosomal protein bL35 family.

This chain is Large ribosomal subunit protein bL35, found in Corynebacterium glutamicum (strain R).